Here is a 284-residue protein sequence, read N- to C-terminus: Acetylglutamate kinase (284 aa).

Substrate is bound by residues 64–65 (GG), Arg-86, and Asn-181.

The protein belongs to the acetylglutamate kinase family. ArgB subfamily.

It is found in the cytoplasm. The enzyme catalyses N-acetyl-L-glutamate + ATP = N-acetyl-L-glutamyl 5-phosphate + ADP. It participates in amino-acid biosynthesis; L-arginine biosynthesis; N(2)-acetyl-L-ornithine from L-glutamate: step 2/4. Catalyzes the ATP-dependent phosphorylation of N-acetyl-L-glutamate. This Wolinella succinogenes (strain ATCC 29543 / DSM 1740 / CCUG 13145 / JCM 31913 / LMG 7466 / NCTC 11488 / FDC 602W) (Vibrio succinogenes) protein is Acetylglutamate kinase.